A 117-amino-acid polypeptide reads, in one-letter code: Large ribosomal subunit protein bL20 (117 aa).

It belongs to the bacterial ribosomal protein bL20 family.

In terms of biological role, binds directly to 23S ribosomal RNA and is necessary for the in vitro assembly process of the 50S ribosomal subunit. It is not involved in the protein synthesizing functions of that subunit. The sequence is that of Large ribosomal subunit protein bL20 from Rickettsia massiliae (strain Mtu5).